The following is a 55-amino-acid chain: MAKGIREKIKLVSSAGTGHYYTTTKNKRTKPEKLELKKFDPVVRQHVIYKEAKIK.

It belongs to the bacterial ribosomal protein bL33 family.

The protein is Large ribosomal subunit protein bL33 of Edwardsiella ictaluri (strain 93-146).